The sequence spans 57 residues: Small ribosomal subunit protein bS21B (57 aa).

A disordered region spans residues 37 to 57 (RYEKPSARRKRKAEAARKRRR). Basic residues predominate over residues 43–57 (ARRKRKAEAARKRRR).

Belongs to the bacterial ribosomal protein bS21 family.

This Gloeobacter violaceus (strain ATCC 29082 / PCC 7421) protein is Small ribosomal subunit protein bS21B.